Consider the following 213-residue polypeptide: RxLR effector protein PexRD1 (213 aa).

Positions Met1 to Ala19 are cleaved as a signal peptide. Residues Arg50–Arg77 carry the RxLR-dEER motif.

It belongs to the RxLR effector family.

It localises to the secreted. The protein resides in the host nucleus. Its function is as follows. Effector that enhances P.infestans colonization of Nicotiana benthamiana leaves. This Phytophthora infestans (strain T30-4) (Potato late blight agent) protein is RxLR effector protein PexRD1.